Reading from the N-terminus, the 231-residue chain is Endo-1,4-beta-xylanase 4 (231 aa).

A signal peptide spans 1–18 (MVSFTTILVAATAALVAA). The GH11 domain maps to 42 to 230 (GGTPSSTGTH…SSGSSTVTIQ (189 aa)). Asn99 is a glycosylation site (N-linked (GlcNAc...) asparagine). Glu126 functions as the Nucleophile in the catalytic mechanism. The active-site Proton donor is Glu217.

It belongs to the glycosyl hydrolase 11 (cellulase G) family.

Its subcellular location is the secreted. It carries out the reaction Endohydrolysis of (1-&gt;4)-beta-D-xylosidic linkages in xylans.. It participates in glycan degradation; xylan degradation. Its function is as follows. Endo-1,4-beta-xylanase involved in the hydrolysis of xylan, a major structural heterogeneous polysaccharide found in plant biomass representing the second most abundant polysaccharide in the biosphere, after cellulose. In Pyricularia grisea (Crabgrass-specific blast fungus), this protein is Endo-1,4-beta-xylanase 4 (XYL4).